The following is a 98-amino-acid chain: NADH-ubiquinone oxidoreductase chain 4L (98 aa).

A run of 3 helical transmembrane segments spans residues 1 to 21 (MSLV…GLLM), 29 to 49 (ALLC…LTIL), and 61 to 81 (IILL…LVMV).

Belongs to the complex I subunit 4L family. Core subunit of respiratory chain NADH dehydrogenase (Complex I) which is composed of 45 different subunits.

It localises to the mitochondrion inner membrane. The enzyme catalyses a ubiquinone + NADH + 5 H(+)(in) = a ubiquinol + NAD(+) + 4 H(+)(out). Core subunit of the mitochondrial membrane respiratory chain NADH dehydrogenase (Complex I) which catalyzes electron transfer from NADH through the respiratory chain, using ubiquinone as an electron acceptor. Part of the enzyme membrane arm which is embedded in the lipid bilayer and involved in proton translocation. The sequence is that of NADH-ubiquinone oxidoreductase chain 4L (MT-ND4L) from Lagenorhynchus albirostris (White-beaked dolphin).